A 223-amino-acid chain; its full sequence is Ribosomal RNA small subunit methyltransferase G (223 aa).

S-adenosyl-L-methionine contacts are provided by residues Gly-84, Leu-89, 135 to 136 (VE), and Arg-150.

The protein belongs to the methyltransferase superfamily. RNA methyltransferase RsmG family.

The protein localises to the cytoplasm. It carries out the reaction guanosine(527) in 16S rRNA + S-adenosyl-L-methionine = N(7)-methylguanosine(527) in 16S rRNA + S-adenosyl-L-homocysteine. In terms of biological role, specifically methylates the N7 position of guanine in position 527 of 16S rRNA. This chain is Ribosomal RNA small subunit methyltransferase G, found in Saccharophagus degradans (strain 2-40 / ATCC 43961 / DSM 17024).